The sequence spans 216 residues: 3-isopropylmalate dehydratase small subunit (216 aa).

This sequence belongs to the LeuD family. LeuD type 1 subfamily. Heterodimer of LeuC and LeuD.

The enzyme catalyses (2R,3S)-3-isopropylmalate = (2S)-2-isopropylmalate. It participates in amino-acid biosynthesis; L-leucine biosynthesis; L-leucine from 3-methyl-2-oxobutanoate: step 2/4. Its function is as follows. Catalyzes the isomerization between 2-isopropylmalate and 3-isopropylmalate, via the formation of 2-isopropylmaleate. In Bordetella avium (strain 197N), this protein is 3-isopropylmalate dehydratase small subunit.